The sequence spans 190 residues: MKLVVGLGNPGRKYDQTRHNIGFMVADALVRRYVGSPPTTKFEGEISECRIENEKVLVLCPQTYMNASGQSVRKAMDFYKLSPEDILVICDDLNLETGRVRLRRSGSAGGQKGLVDIIRHLGSEQWARLKIGIGRPPAKWQVSDYVLGKFDKTELEEMEHAIVHSCDATACWVADGVTEAMNRYNAASGT.

TRNA is bound at residue tyrosine 14. Histidine 19 serves as the catalytic Proton acceptor. 2 residues coordinate tRNA: tyrosine 64 and asparagine 66.

Belongs to the PTH family. As to quaternary structure, monomer.

Its subcellular location is the cytoplasm. The catalysed reaction is an N-acyl-L-alpha-aminoacyl-tRNA + H2O = an N-acyl-L-amino acid + a tRNA + H(+). Its function is as follows. Hydrolyzes ribosome-free peptidyl-tRNAs (with 1 or more amino acids incorporated), which drop off the ribosome during protein synthesis, or as a result of ribosome stalling. In terms of biological role, catalyzes the release of premature peptidyl moieties from peptidyl-tRNA molecules trapped in stalled 50S ribosomal subunits, and thus maintains levels of free tRNAs and 50S ribosomes. In Rhodopirellula baltica (strain DSM 10527 / NCIMB 13988 / SH1), this protein is Peptidyl-tRNA hydrolase.